Reading from the N-terminus, the 211-residue chain is Large ribosomal subunit protein uL4 (211 aa).

2 disordered regions span residues 1–28 (MAQA…ETEP) and 48–99 (TAST…GPRY). A compositionally biased stretch (basic and acidic residues) spans 10–28 (RTGRRSEMELKGPRFETEP).

The protein belongs to the universal ribosomal protein uL4 family. As to quaternary structure, part of the 50S ribosomal subunit.

One of the primary rRNA binding proteins, this protein initially binds near the 5'-end of the 23S rRNA. It is important during the early stages of 50S assembly. It makes multiple contacts with different domains of the 23S rRNA in the assembled 50S subunit and ribosome. In terms of biological role, forms part of the polypeptide exit tunnel. In Rubrobacter xylanophilus (strain DSM 9941 / JCM 11954 / NBRC 16129 / PRD-1), this protein is Large ribosomal subunit protein uL4.